Here is a 392-residue protein sequence, read N- to C-terminus: Bone morphogenetic protein 15 (392 aa).

The N-terminal stretch at M1–F18 is a signal peptide. Positions M19–R267 are excised as a propeptide. N-linked (GlcNAc...) asparagine glycans are attached at residues N87, N147, and N237. Q268 carries the post-translational modification Pyrrolidone carboxylic acid; in P16 and P17. S273 carries the phosphoserine; in P16 modification. O-linked (HexNAc...) threonine; in P17 glycosylation occurs at T277. 3 disulfides stabilise this stretch: C291-C357, C320-C389, and C324-C391. N-linked (GlcNAc...) asparagine glycosylation is present at N373.

Belongs to the TGF-beta family. In terms of assembly, homodimer. But, in contrast to other members of this family, cannot be disulfide-linked.

The protein resides in the secreted. May be involved in follicular development. Oocyte-specific growth/differentiation factor that stimulates folliculogenesis and granulosa cell (GC) growth. This chain is Bone morphogenetic protein 15 (BMP15), found in Homo sapiens (Human).